The following is a 102-amino-acid chain: Large ribosomal subunit protein bL21 (102 aa).

Residues 77–88 (KPKKHTHTKQGH) show a composition bias toward basic residues. Positions 77 to 102 (KPKKHTHTKQGHRQPYTKVTINKINA) are disordered. Over residues 93–102 (TKVTINKINA) the composition is skewed to polar residues.

Belongs to the bacterial ribosomal protein bL21 family. In terms of assembly, part of the 50S ribosomal subunit. Contacts protein L20.

Functionally, this protein binds to 23S rRNA in the presence of protein L20. In Limosilactobacillus reuteri (strain DSM 20016) (Lactobacillus reuteri), this protein is Large ribosomal subunit protein bL21.